Here is a 794-residue protein sequence, read N- to C-terminus: DNA ligase (794 aa).

NAD(+)-binding positions include 35–39 (DAEYD), 84–85 (SL), and glutamate 126. Lysine 128 functions as the N6-AMP-lysine intermediate in the catalytic mechanism. NAD(+) is bound by residues arginine 149, glutamate 186, lysine 302, and lysine 326. The Zn(2+) site is built by cysteine 420, cysteine 423, cysteine 450, and cysteine 456. The BRCT domain maps to 711-794 (VEGLPLAGQT…KLLDEYGVAH (84 aa)).

This sequence belongs to the NAD-dependent DNA ligase family. LigA subfamily. It depends on Mg(2+) as a cofactor. Mn(2+) is required as a cofactor.

The enzyme catalyses NAD(+) + (deoxyribonucleotide)n-3'-hydroxyl + 5'-phospho-(deoxyribonucleotide)m = (deoxyribonucleotide)n+m + AMP + beta-nicotinamide D-nucleotide.. Its function is as follows. DNA ligase that catalyzes the formation of phosphodiester linkages between 5'-phosphoryl and 3'-hydroxyl groups in double-stranded DNA using NAD as a coenzyme and as the energy source for the reaction. It is essential for DNA replication and repair of damaged DNA. The sequence is that of DNA ligase from Pseudomonas paraeruginosa (strain DSM 24068 / PA7) (Pseudomonas aeruginosa (strain PA7)).